Consider the following 307-residue polypeptide: uncharacterized protein (307 aa).

An HTH lysR-type domain is found at I11–T68. Residues L28–N47 constitute a DNA-binding region (H-T-H motif).

It belongs to the LysR transcriptional regulatory family.

This is an uncharacterized protein from Escherichia coli (strain K12).